The sequence spans 396 residues: Ornithine aminotransferase (396 aa).

Position 255 is an N6-(pyridoxal phosphate)lysine (lysine 255).

The protein belongs to the class-III pyridoxal-phosphate-dependent aminotransferase family. OAT subfamily. It depends on pyridoxal 5'-phosphate as a cofactor.

Its subcellular location is the cytoplasm. It catalyses the reaction a 2-oxocarboxylate + L-ornithine = L-glutamate 5-semialdehyde + an L-alpha-amino acid. It functions in the pathway amino-acid biosynthesis; L-proline biosynthesis; L-glutamate 5-semialdehyde from L-ornithine: step 1/1. In terms of biological role, catalyzes the interconversion of ornithine to glutamate semialdehyde. The polypeptide is Ornithine aminotransferase (Bacillus cereus (strain 03BB102)).